We begin with the raw amino-acid sequence, 337 residues long: Cytoskeleton protein RodZ (337 aa).

At 1-111 (MNTEATHDQN…LGKRRKKRDG (111 aa)) the chain is on the cytoplasmic side. An HTH cro/C1-type domain is found at 19–71 (LRNAREQLGLSQQAVAERLCLKVSTVRDIEEDKAPADLASTFLRGYIRSYARL). The segment at residues 30–49 (QQAVAERLCLKVSTVRDIEE) is a DNA-binding region (H-T-H motif). A helical; Signal-anchor for type II membrane protein membrane pass occupies residues 112-132 (WLMTFTWLVLFVVIGLSGAWW). Topologically, residues 133–337 (WQDRKAQQEE…TLNAEQSPAQ (205 aa)) are periplasmic. Residues 144 to 167 (TTMADQSSAELSSNSEQGQSVPLN) show a composition bias toward polar residues. The disordered stretch occupies residues 144–235 (TTMADQSSAE…PTAATTPDGA (92 aa)). Residues 168-207 (TSTTTDPATTSTPPASVDTTATNTQTPAVTAPAPAVDPQQ) show a composition bias toward low complexity. Residues 208–218 (NAVVSPSQANV) show a composition bias toward polar residues. Low complexity predominate over residues 219 to 235 (DTAATPAPTAATTPDGA).

This sequence belongs to the RodZ family.

It localises to the cell inner membrane. Functionally, cytoskeletal protein that is involved in cell-shape control through regulation of the length of the long axis. This chain is Cytoskeleton protein RodZ, found in Escherichia coli (strain K12 / MC4100 / BW2952).